Consider the following 431-residue polypeptide: 4-hydroxy-3-methylbut-2-en-1-yl diphosphate synthase (flavodoxin) (431 aa).

The disordered stretch occupies residues 1–21 (MNKLENPSQRDVAGPSPRHKT). Positions 310, 313, 356, and 363 each coordinate [4Fe-4S] cluster.

The protein belongs to the IspG family. [4Fe-4S] cluster is required as a cofactor.

The catalysed reaction is (2E)-4-hydroxy-3-methylbut-2-enyl diphosphate + oxidized [flavodoxin] + H2O + 2 H(+) = 2-C-methyl-D-erythritol 2,4-cyclic diphosphate + reduced [flavodoxin]. It functions in the pathway isoprenoid biosynthesis; isopentenyl diphosphate biosynthesis via DXP pathway; isopentenyl diphosphate from 1-deoxy-D-xylulose 5-phosphate: step 5/6. Converts 2C-methyl-D-erythritol 2,4-cyclodiphosphate (ME-2,4cPP) into 1-hydroxy-2-methyl-2-(E)-butenyl 4-diphosphate. The protein is 4-hydroxy-3-methylbut-2-en-1-yl diphosphate synthase (flavodoxin) of Nitrobacter hamburgensis (strain DSM 10229 / NCIMB 13809 / X14).